We begin with the raw amino-acid sequence, 359 residues long: 3-dehydroquinate synthase (359 aa).

Residues 71 to 76 (DGEAYK), 105 to 109 (GVVGD), 129 to 130 (TT), lysine 142, and lysine 151 contribute to the NAD(+) site. 3 residues coordinate Zn(2+): glutamate 184, histidine 247, and histidine 264.

The protein belongs to the sugar phosphate cyclases superfamily. Dehydroquinate synthase family. Co(2+) is required as a cofactor. It depends on Zn(2+) as a cofactor. Requires NAD(+) as cofactor.

It is found in the cytoplasm. It carries out the reaction 7-phospho-2-dehydro-3-deoxy-D-arabino-heptonate = 3-dehydroquinate + phosphate. It participates in metabolic intermediate biosynthesis; chorismate biosynthesis; chorismate from D-erythrose 4-phosphate and phosphoenolpyruvate: step 2/7. Catalyzes the conversion of 3-deoxy-D-arabino-heptulosonate 7-phosphate (DAHP) to dehydroquinate (DHQ). In Burkholderia cenocepacia (strain ATCC BAA-245 / DSM 16553 / LMG 16656 / NCTC 13227 / J2315 / CF5610) (Burkholderia cepacia (strain J2315)), this protein is 3-dehydroquinate synthase.